Here is a 753-residue protein sequence, read N- to C-terminus: 5-methyltetrahydropteroyltriglutamate--homocysteine methyltransferase (753 aa).

5-methyltetrahydropteroyltri-L-glutamate-binding positions include 17–20 (RELK) and K117. Residues 431 to 433 (IGS) and E484 contribute to the L-homocysteine site. L-methionine is bound by residues 431 to 433 (IGS) and E484. 5-methyltetrahydropteroyltri-L-glutamate-binding positions include 515-516 (RC) and W561. Position 599 (D599) interacts with L-homocysteine. L-methionine is bound at residue D599. Residue E605 participates in 5-methyltetrahydropteroyltri-L-glutamate binding. Positions 641, 643, and 665 each coordinate Zn(2+). H694 acts as the Proton donor in catalysis. C726 contacts Zn(2+).

The protein belongs to the vitamin-B12 independent methionine synthase family. Zn(2+) serves as cofactor.

The catalysed reaction is 5-methyltetrahydropteroyltri-L-glutamate + L-homocysteine = tetrahydropteroyltri-L-glutamate + L-methionine. The protein operates within amino-acid biosynthesis; L-methionine biosynthesis via de novo pathway; L-methionine from L-homocysteine (MetE route): step 1/1. Functionally, catalyzes the transfer of a methyl group from 5-methyltetrahydrofolate to homocysteine resulting in methionine formation. This chain is 5-methyltetrahydropteroyltriglutamate--homocysteine methyltransferase, found in Escherichia coli (strain ATCC 8739 / DSM 1576 / NBRC 3972 / NCIMB 8545 / WDCM 00012 / Crooks).